The sequence spans 155 residues: Myosin light chain alkali (155 aa).

2 consecutive EF-hand domains span residues 7–41 (REVE…LNLN) and 80–115 (GCYE…LGES).

In terms of assembly, myosin is a hexamer of 2 heavy chains and 4 light chains.

The chain is Myosin light chain alkali (Mlc1) from Drosophila simulans (Fruit fly).